A 128-amino-acid chain; its full sequence is Fluoride-specific ion channel FluC (128 aa).

Helical transmembrane passes span 7 to 27 (AVLL…LIAV), 34 to 54 (TGFP…IGMI), 70 to 90 (LLLA…MYEI), and 104 to 124 (LYLI…MALA). Na(+) contacts are provided by G78 and T81.

Belongs to the fluoride channel Fluc/FEX (TC 1.A.43) family.

It is found in the cell inner membrane. The enzyme catalyses fluoride(in) = fluoride(out). With respect to regulation, na(+) is not transported, but it plays an essential structural role and its presence is essential for fluoride channel function. In terms of biological role, fluoride-specific ion channel. Important for reducing fluoride concentration in the cell, thus reducing its toxicity. The polypeptide is Fluoride-specific ion channel FluC (Prosthecochloris aestuarii (strain DSM 271 / SK 413)).